The sequence spans 513 residues: ATP synthase subunit alpha (513 aa).

ATP is bound at residue 169–176 (GDRQTGKT).

The protein belongs to the ATPase alpha/beta chains family. F-type ATPases have 2 components, CF(1) - the catalytic core - and CF(0) - the membrane proton channel. CF(1) has five subunits: alpha(3), beta(3), gamma(1), delta(1), epsilon(1). CF(0) has three main subunits: a(1), b(2) and c(9-12). The alpha and beta chains form an alternating ring which encloses part of the gamma chain. CF(1) is attached to CF(0) by a central stalk formed by the gamma and epsilon chains, while a peripheral stalk is formed by the delta and b chains.

The protein resides in the cell inner membrane. The catalysed reaction is ATP + H2O + 4 H(+)(in) = ADP + phosphate + 5 H(+)(out). Its function is as follows. Produces ATP from ADP in the presence of a proton gradient across the membrane. The alpha chain is a regulatory subunit. The sequence is that of ATP synthase subunit alpha from Histophilus somni (strain 2336) (Haemophilus somnus).